The following is a 769-amino-acid chain: Metal transporter CNNM4 (769 aa).

Topologically, residues 1 to 175 are extracellular; the sequence is MAASAGCYYG…RLRVLEEEKP (175 aa). N99 and N115 each carry an N-linked (GlcNAc...) asparagine glycan. A CNNM transmembrane domain is found at 175-355; the sequence is PLLPIWLQAC…EPYSGIVREE (181 aa). A helical membrane pass occupies residues 176 to 196; that stretch reads LLPIWLQACIIAVLLTLSGIF. Over 197 to 237 the chain is Cytoplasmic; it reads SGLNLGLMALDPMELRVVQRCGTEKEKRYASKIEPVRRKGN. Positions 238-258 form an intramembrane region, helical; sequence YLLCSLLLGNVLVNTTLTALL. Residues 259–261 lie on the Cytoplasmic side of the membrane; sequence DEL. A helical transmembrane segment spans residues 262-282; it reads IGSGLAAVLASTTGIVVLGEI. Residues 283-292 are Extracellular-facing; that stretch reads VPQALCSRHG. Residues 293–313 traverse the membrane as a helical segment; it reads LAVGANTLWLTRIFMLLTFPV. Residues 314–769 are Cytoplasmic-facing; that stretch reads AYPVSRLLDC…SQHSLQHNAV (456 aa). CBS domains are found at residues 374–435 and 442–508; these read MTKV…CTPL and YSHP…ILDE. The disordered stretch occupies residues 717 to 769; sequence LMSSRLDSSPQSPEGGTRKPDSTLSERSEVLEDETTSLLNQRNSQHSLQHNAV. Over residues 721–730 the composition is skewed to polar residues; that stretch reads RLDSSPQSPE. Positions 732–746 are enriched in basic and acidic residues; sequence GTRKPDSTLSERSEV. Over residues 752–769 the composition is skewed to polar residues; the sequence is TSLLNQRNSQHSLQHNAV.

This sequence belongs to the ACDP family.

The protein localises to the cell membrane. Its function is as follows. Probable metal transporter. This Xenopus tropicalis (Western clawed frog) protein is Metal transporter CNNM4 (cnnm4).